We begin with the raw amino-acid sequence, 478 residues long: Lysosome membrane protein 2 (478 aa).

At 1–4 the chain is on the cytoplasmic side; sequence MGRC. Residues 5 to 27 form a helical membrane-spanning segment; the sequence is CFYTAGTLSLLLLVTSVTLLVAR. The Lumenal segment spans residues 28 to 433; the sequence is VFQKAVDQTI…QLKSVINTTL (406 aa). 4 N-linked (GlcNAc...) asparagine glycosylation sites follow: asparagine 45, asparagine 68, asparagine 105, and asparagine 122. The segment at 155–191 is important for interaction with GBA1; the sequence is LIEAMLKAYQQKLFVIHTVHELLWGYKDEILSLVHIF. N-linked (GlcNAc...) asparagine glycans are attached at residues asparagine 206, asparagine 224, asparagine 249, and asparagine 304. 2 disulfides stabilise this stretch: cysteine 274–cysteine 329 and cysteine 312–cysteine 318. N-linked (GlcNAc...) asparagine glycans are attached at residues asparagine 325, asparagine 412, and asparagine 430. The helical transmembrane segment at 434–459 threads the bilayer; the sequence is VVTNIPYIIMALGVFFGLVFTWLACR. Topologically, residues 460–478 are cytoplasmic; sequence GQGSMDEGTADERAPLIRT.

The protein belongs to the CD36 family. As to quaternary structure, interacts with GBA1. Post-translationally, acylated by palmitic acid group(s). In terms of processing, heavily glycosylated. In terms of tissue distribution, detected in the extracts of brain, heart, lung, liver and kidney.

The protein resides in the lysosome membrane. Acts as a lysosomal receptor for glucosylceramidase (GBA1) targeting. The sequence is that of Lysosome membrane protein 2 (Scarb2) from Mus musculus (Mouse).